A 241-amino-acid polypeptide reads, in one-letter code: Small ribosomal subunit protein uS3 (241 aa).

Positions 39–108 (IREGVLKLLK…NLKVEVKVIE (70 aa)) constitute a KH type-2 domain. The interval 215-241 (SQRVSEKAPMNNDRRFNNKNNNRGGRK) is disordered. The span at 232 to 241 (NKNNNRGGRK) shows a compositional bias: low complexity.

The protein belongs to the universal ribosomal protein uS3 family. In terms of assembly, part of the 30S ribosomal subunit. Forms a tight complex with proteins S10 and S14.

In terms of biological role, binds the lower part of the 30S subunit head. Binds mRNA in the 70S ribosome, positioning it for translation. This Mesoplasma florum (strain ATCC 33453 / NBRC 100688 / NCTC 11704 / L1) (Acholeplasma florum) protein is Small ribosomal subunit protein uS3.